We begin with the raw amino-acid sequence, 181 residues long: GMP synthase [glutamine-hydrolyzing] subunit A (181 aa).

Positions 2-181 constitute a Glutamine amidotransferase type-1 domain; the sequence is KILVVNNYGQ…FDNFLEICRR (180 aa). The Nucleophile role is filled by C72. Active-site residues include H159 and E161.

As to quaternary structure, heterodimer composed of a glutamine amidotransferase subunit (A) and a GMP-binding subunit (B).

It carries out the reaction XMP + L-glutamine + ATP + H2O = GMP + L-glutamate + AMP + diphosphate + 2 H(+). It functions in the pathway purine metabolism; GMP biosynthesis; GMP from XMP (L-Gln route): step 1/1. Catalyzes the synthesis of GMP from XMP. The protein is GMP synthase [glutamine-hydrolyzing] subunit A of Methanothrix thermoacetophila (strain DSM 6194 / JCM 14653 / NBRC 101360 / PT) (Methanosaeta thermophila).